We begin with the raw amino-acid sequence, 225 residues long: Putative O-phosphotransferase MT2714 (225 aa).

30–37 (GGSSAGKT) contacts ATP.

It to S.violaceus chloramphenicol 3-O phosphotransferase.

The protein is Putative O-phosphotransferase MT2714 of Mycobacterium tuberculosis (strain CDC 1551 / Oshkosh).